We begin with the raw amino-acid sequence, 503 residues long: Maturase K (503 aa).

Belongs to the intron maturase 2 family. MatK subfamily.

It is found in the plastid. It localises to the chloroplast. In terms of biological role, usually encoded in the trnK tRNA gene intron. Probably assists in splicing its own and other chloroplast group II introns. In Rosa foetida (Austrian briar), this protein is Maturase K.